A 193-amino-acid chain; its full sequence is Sporulation-specific transcriptional regulator GerR (193 aa).

In terms of domain architecture, HTH myb-type spans 1 to 61; it reads MTITRQDAWT…RWNSYVRKQY (61 aa). A DNA-binding region (H-T-H motif) is located at residues 35–57; it reads FEEVGRALTRTAAACGFRWNSYV. Positions 122–177 form a coiled coil; that stretch reads AQEFQLEREKLKEQIQSLQKELEDLRSENQTLRNQLEMTEEDYKALIDIMDRARKM.

It belongs to the RsfA transcriptional regulator family.

In terms of biological role, transcriptional factor that regulates the expression of several late sporulation genes. Controls genes of both sigma-E and sigma-K regulons, acting alone on some genes and in conjunction with SpoIIID or GerE on others. Regulates, directly or indirectly, the expression of genes encoding coat proteins such as cgeA, cotB, cotC, cotG, cotU and cotY. Controls late sporulation genes in two ways: directly, by binding to the promoter region of genes such as cotB, cotU and spoVIF, and acting directly on their transcription, and indirectly, through the activation of SpoVIF, which stabilizes the transcriptional activator GerE and consequently induces the expression of the GerE-dependent genes, such as cotC and cotG. Its effect is strongly positive on spoVIF, cotC, and cotG, weakly positive on cotB, and negative on cotU. The protein is Sporulation-specific transcriptional regulator GerR of Bacillus subtilis (strain 168).